Reading from the N-terminus, the 326-residue chain is Biotin synthase (326 aa).

The Radical SAM core domain maps to 40–264 (GQVQACTLVS…VLPRSYVRLA (225 aa)). Positions 55, 59, and 62 each coordinate [4Fe-4S] cluster. Residues C99, C130, C190, and R262 each contribute to the [2Fe-2S] cluster site.

Belongs to the radical SAM superfamily. Biotin synthase family. As to quaternary structure, homodimer. Requires [4Fe-4S] cluster as cofactor. [2Fe-2S] cluster serves as cofactor.

It catalyses the reaction (4R,5S)-dethiobiotin + (sulfur carrier)-SH + 2 reduced [2Fe-2S]-[ferredoxin] + 2 S-adenosyl-L-methionine = (sulfur carrier)-H + biotin + 2 5'-deoxyadenosine + 2 L-methionine + 2 oxidized [2Fe-2S]-[ferredoxin]. It participates in cofactor biosynthesis; biotin biosynthesis; biotin from 7,8-diaminononanoate: step 2/2. Catalyzes the conversion of dethiobiotin (DTB) to biotin by the insertion of a sulfur atom into dethiobiotin via a radical-based mechanism. This Halorhodospira halophila (strain DSM 244 / SL1) (Ectothiorhodospira halophila (strain DSM 244 / SL1)) protein is Biotin synthase.